Here is a 385-residue protein sequence, read N- to C-terminus: 3-hydroxyisobutyryl-CoA hydrolase, mitochondrial (385 aa).

Residues glutamate 120, glycine 145, glutamate 168, and aspartate 176 each contribute to the substrate site.

Belongs to the enoyl-CoA hydratase/isomerase family.

It localises to the mitochondrion. It catalyses the reaction 3-hydroxy-2-methylpropanoyl-CoA + H2O = 3-hydroxy-2-methylpropanoate + CoA + H(+). The protein operates within amino-acid degradation; L-valine degradation. Its function is as follows. Hydrolyzes 3-hydroxyisobutyryl-CoA (HIBYL-CoA), a saline catabolite. Has high activity toward isobutyryl-CoA. Could be an isobutyryl-CoA dehydrogenase that functions in valine catabolism. Also hydrolyzes 3-hydroxypropanoyl-CoA. This chain is 3-hydroxyisobutyryl-CoA hydrolase, mitochondrial (hibch), found in Xenopus tropicalis (Western clawed frog).